The sequence spans 107 residues: uncharacterized protein (107 aa).

The chain crosses the membrane as a helical span at residues 9 to 31; that stretch reads AAAIITAPTILAMMSTVLRALIF.

It is found in the membrane. This is an uncharacterized protein from Archaeoglobus fulgidus (strain ATCC 49558 / DSM 4304 / JCM 9628 / NBRC 100126 / VC-16).